The primary structure comprises 339 residues: Fructose-1,6-bisphosphatase class 1 (339 aa).

Mg(2+) is bound by residues Glu91, Asp113, Leu115, and Asp116. Substrate-binding positions include 116–119 (DGSS), Asn210, and Lys276. Glu282 contacts Mg(2+).

Belongs to the FBPase class 1 family. In terms of assembly, homotetramer. Mg(2+) serves as cofactor.

Its subcellular location is the cytoplasm. The catalysed reaction is beta-D-fructose 1,6-bisphosphate + H2O = beta-D-fructose 6-phosphate + phosphate. The protein operates within carbohydrate biosynthesis; gluconeogenesis. The chain is Fructose-1,6-bisphosphatase class 1 from Bordetella bronchiseptica (strain ATCC BAA-588 / NCTC 13252 / RB50) (Alcaligenes bronchisepticus).